Reading from the N-terminus, the 146-residue chain is uncharacterized protein (146 aa).

In terms of domain architecture, HTH marR-type spans 9–141 (VADIEKSLRH…FEKSLMKLQH (133 aa)). The H-T-H motif DNA-binding region spans 55–78 (IGELSGKMYLACSTTTDLIDRMQK).

This is an uncharacterized protein from Bacillus subtilis (strain 168).